Here is a 194-residue protein sequence, read N- to C-terminus: Pyridoxine/pyridoxamine 5'-phosphate oxidase (194 aa).

FMN is bound by residues Arg-42–Lys-47, Phe-57–Thr-58, Arg-63, Lys-64, and Gln-86. Lys-47 lines the substrate pocket. Positions 104, 108, and 112 each coordinate substrate. Residues Gln-121 to Ser-122 and Trp-166 contribute to the FMN site. A substrate-binding site is contributed by Arg-172–His-174. Position 176 (Arg-176) interacts with FMN.

It belongs to the pyridoxamine 5'-phosphate oxidase family. As to quaternary structure, homodimer. FMN serves as cofactor.

The enzyme catalyses pyridoxamine 5'-phosphate + O2 + H2O = pyridoxal 5'-phosphate + H2O2 + NH4(+). It catalyses the reaction pyridoxine 5'-phosphate + O2 = pyridoxal 5'-phosphate + H2O2. Its pathway is cofactor metabolism; pyridoxal 5'-phosphate salvage; pyridoxal 5'-phosphate from pyridoxamine 5'-phosphate: step 1/1. The protein operates within cofactor metabolism; pyridoxal 5'-phosphate salvage; pyridoxal 5'-phosphate from pyridoxine 5'-phosphate: step 1/1. Functionally, catalyzes the oxidation of either pyridoxine 5'-phosphate (PNP) or pyridoxamine 5'-phosphate (PMP) into pyridoxal 5'-phosphate (PLP). The sequence is that of Pyridoxine/pyridoxamine 5'-phosphate oxidase from Ehrlichia ruminantium (strain Welgevonden).